Consider the following 170-residue polypeptide: MPTKSIKIMVEGGNVKPGPPLAPTLSQLGLNVGEVVKKLNEATSSFKGMSVPVTIEVDSNTKKYEIKVGIPTTTALLLKEAGASEPSGDPAHKKIGNLSLEQVIKIAIMKKPGLTTKSLKAAVKSMLGTAKSIGVTVENKDPKELVKEVEEGKYDDLLAKYENEWNEVKE.

This sequence belongs to the universal ribosomal protein uL11 family. Part of the ribosomal stalk of the 50S ribosomal subunit. Interacts with L10 and the large rRNA to form the base of the stalk. L10 forms an elongated spine to which L12 dimers bind in a sequential fashion forming a multimeric L10(L12)X complex.

In terms of biological role, forms part of the ribosomal stalk which helps the ribosome interact with GTP-bound translation factors. The sequence is that of Large ribosomal subunit protein uL11 from Saccharolobus islandicus (strain M.16.27) (Sulfolobus islandicus).